We begin with the raw amino-acid sequence, 389 residues long: Spore coat polysaccharide biosynthesis protein SpsC (389 aa).

The residue at position 187 (lysine 187) is an N6-(pyridoxal phosphate)lysine.

This sequence belongs to the DegT/DnrJ/EryC1 family. The cofactor is pyridoxal 5'-phosphate.

It participates in spore coat biogenesis; spore coat polysaccharide biosynthesis. In Bacillus subtilis (strain 168), this protein is Spore coat polysaccharide biosynthesis protein SpsC (spsC).